The chain runs to 478 residues: Tubulin gamma chain (478 aa).

Position 141–147 (141–147 (AGGTGSG)) interacts with GTP. A disordered region spans residues 451–478 (ISQKESSSLANENGNGANNKPGKSAMAL). A compositionally biased stretch (polar residues) spans 459-468 (LANENGNGAN).

This sequence belongs to the tubulin family.

It is found in the cytoplasm. It localises to the cytoskeleton. The protein resides in the microtubule organizing center. The protein localises to the centrosome. Its function is as follows. Tubulin is the major constituent of microtubules. The gamma chain is found at microtubule organizing centers (MTOC) such as the spindle poles or the centrosome, suggesting that it is involved in the minus-end nucleation of microtubule assembly. In Reticulomyxa filosa, this protein is Tubulin gamma chain.